The sequence spans 431 residues: Mannan endo-1,4-beta-mannosidase 7 (431 aa).

Residues 1 to 25 (MKLLALFPFLAIVIQLSCWELGTDA) form the signal peptide. Substrate is bound by residues W87 and N202. E203 (proton donor) is an active-site residue. Y280 lines the substrate pocket. E320 acts as the Nucleophile in catalysis. W362 contributes to the substrate binding site.

The protein belongs to the glycosyl hydrolase 5 (cellulase A) family. Expressed in stems, flowers, siliques and seeds. Expressed in root vasculature, leaf hydathodes, anther filaments, stigma, sepal vasculature, at the base and apical parts of siliques, and replum. Expressed in the micropylar endosperm and radicle tip in early germinating seeds.

It is found in the secreted. It catalyses the reaction Random hydrolysis of (1-&gt;4)-beta-D-mannosidic linkages in mannans, galactomannans and glucomannans.. Functionally, required for both, loosening of the micropylar endosperm, and rupture of the seed coat in germinating seeds. May participate in the hydrolysis of the mannans in the cell wall of germinating seeds. The protein is Mannan endo-1,4-beta-mannosidase 7 (MAN7) of Arabidopsis thaliana (Mouse-ear cress).